We begin with the raw amino-acid sequence, 354 residues long: 3-dehydroquinate synthase (354 aa).

NAD(+) is bound by residues 66–71 (DGERYK), 100–104 (GVVGD), 124–125 (TT), K137, and K146. Residues E179, H242, and H259 each contribute to the Zn(2+) site.

It belongs to the sugar phosphate cyclases superfamily. Dehydroquinate synthase family. Co(2+) serves as cofactor. The cofactor is Zn(2+). It depends on NAD(+) as a cofactor.

Its subcellular location is the cytoplasm. The catalysed reaction is 7-phospho-2-dehydro-3-deoxy-D-arabino-heptonate = 3-dehydroquinate + phosphate. It functions in the pathway metabolic intermediate biosynthesis; chorismate biosynthesis; chorismate from D-erythrose 4-phosphate and phosphoenolpyruvate: step 2/7. Catalyzes the conversion of 3-deoxy-D-arabino-heptulosonate 7-phosphate (DAHP) to dehydroquinate (DHQ). This Halorhodospira halophila (strain DSM 244 / SL1) (Ectothiorhodospira halophila (strain DSM 244 / SL1)) protein is 3-dehydroquinate synthase.